Here is a 211-residue protein sequence, read N- to C-terminus: Prolactin (211 aa).

Residues 1–24 form the signal peptide; sequence MTHRRTKLFMMAAVVSYVMTSCGA. 2 cysteine pairs are disulfide-bonded: C70–C184 and C201–C211.

This sequence belongs to the somatotropin/prolactin family.

It localises to the secreted. The polypeptide is Prolactin (prl) (Paralichthys olivaceus (Bastard halibut)).